The primary structure comprises 467 residues: Putative laccase-16 (467 aa).

Plastocyanin-like domains are found at residues Val7–Gly88, Lys98–Ser225, and Asp318–Lys451. Residues His22, His24, His67, and His69 each coordinate Cu cation. Cu cation contacts are provided by His368, His371, His373, His430, Cys431, His432, His436, and Met441.

The protein belongs to the multicopper oxidase family. Cu cation serves as cofactor.

Its subcellular location is the secreted. The protein localises to the extracellular space. The protein resides in the apoplast. It carries out the reaction 4 hydroquinone + O2 = 4 benzosemiquinone + 2 H2O. Functionally, lignin degradation and detoxification of lignin-derived products. This chain is Putative laccase-16 (LAC16), found in Oryza sativa subsp. japonica (Rice).